The following is a 415-amino-acid chain: uncharacterized protein (415 aa).

The [4Fe-4S] cluster site is built by Cys66, Cys72, Cys75, and Cys149. S-adenosyl-L-methionine contacts are provided by Gln249, Phe276, Glu296, and Asp344. The Nucleophile role is filled by Cys370.

This sequence belongs to the class I-like SAM-binding methyltransferase superfamily. RNA M5U methyltransferase family.

This is an uncharacterized protein from Brucella suis biovar 1 (strain 1330).